The chain runs to 963 residues: Seizure 6-like protein (963 aa).

Positions 1-31 (MPVARPQAAGPDRISLFLVAFLLGSPAAAQA) are cleaved as a signal peptide. Disordered stretches follow at residues 28–63 (AAQA…GVTS), 116–150 (RPLA…TAPA), and 164–204 (LPHS…TTTS). The Extracellular segment spans residues 32–897 (EDGGPEGEMH…ESSLEGGNMA (866 aa)). The span at 47-59 (LLPSASLESSLEE) shows a compositional bias: low complexity. Polar residues predominate over residues 120–135 (TPTTLQRLGSPASATT). Over residues 191–204 (TGSASEESQETTTS) the composition is skewed to low complexity. The cysteines at positions 221 and 248 are disulfide-linked. A CUB 1 domain is found at 221 to 329 (CGVSFSDPEG…GTFQLHYQAF (109 aa)). Asn-251, Asn-268, and Asn-290 each carry an N-linked (GlcNAc...) asparagine glycan. The region spanning 331–390 (LSCPFPRRPDAGEVTVMDLHSGGVAHFHCHLGYELQGAKTLTCINASKPHWSSQEPVCSA) is the Sushi 1 domain. Disulfide bonds link Cys-333–Cys-373, Cys-359–Cys-388, and Cys-392–Cys-419. N-linked (GlcNAc...) asparagine glycosylation is found at Asn-375, Asn-398, Asn-414, Asn-454, Asn-516, and Asn-558. Residues 392–502 (CGGAVHNATI…SAFNIRFEAF (111 aa)) form the CUB 2 domain. The 62-residue stretch at 505–566 (GHCYEPYIQN…WNDTEPLCRA (62 aa)) folds into the Sushi 2 domain. 3 cysteine pairs are disulfide-bonded: Cys-507-Cys-549, Cys-534-Cys-564, and Cys-568-Cys-594. Residues 568-679 (CGGELSAVAG…QGFIMNYIEV (112 aa)) enclose the CUB 3 domain. N-linked (GlcNAc...) asparagine glycosylation is found at Asn-614 and Asn-682. Sushi domains lie at 683–742 (DSCS…FCEK), 744–807 (MYCT…HCVS), and 811–872 (LACD…ICKV). Disulfide bonds link Cys-685–Cys-727, Cys-713–Cys-740, Cys-746–Cys-788, Cys-774–Cys-805, Cys-813–Cys-855, and Cys-841–Cys-870. The helical transmembrane segment at 898-918 (LAIFIPVLLISLLLGGAYIYV) threads the bilayer. Topologically, residues 919-963 (TRCRQYSSLRLPLMYSHPYSQITVETEFDNPIYETGETREYEVSI) are cytoplasmic.

The protein belongs to the SEZ6 family. As to expression, expressed exclusively in the brain, predominantly in neurons. Wide expression in the gray matter of the brain with high levels in the olfactory bulb, anterior olfactory nuclei, hippocampal formation and cerebellar cortex. Detected diffusely and weakly in the white matter, such as the corpus callosum and cerebellar medulla. In the cerebellar cortex, intensely expressed in Purkinje cells and granule cells. Detected also in interneurons in the molecular layer.

It localises to the cell membrane. It is found in the endoplasmic reticulum membrane. Functionally, candidate tumor suppressor gene. May contribute to specialized endoplasmic reticulum functions in neurons. This chain is Seizure 6-like protein (Sez6l), found in Mus musculus (Mouse).